The following is a 208-amino-acid chain: Sexual inducer glycoprotein (208 aa).

The signal sequence occupies residues methionine 1–alanine 11. Residues asparagine 89, asparagine 119, asparagine 131, asparagine 139, asparagine 146, and asparagine 188 are each glycosylated (N-linked (GlcNAc...) asparagine).

Functionally, the sexual inducer is a glycoprotein synthesized and released by sexual males at about the time they release sperm packets. It is one of the most potent biological effector molecules known: it exhibits full effectiveness in converting asexually growing males and females to the sexual pathway at about 10(-7) m. In Volvox carteri (Green alga), this protein is Sexual inducer glycoprotein.